A 1270-amino-acid polypeptide reads, in one-letter code: ATP-dependent helicase/nuclease subunit A (1270 aa).

Residues 3-476 (TKWTEEQELA…IMLYKNFRSR (474 aa)) form the UvrD-like helicase ATP-binding domain. ATP is bound at residue 24 to 31 (AAAGSGKT). One can recognise a UvrD-like helicase C-terminal domain in the interval 528 to 823 (IENLKVAGDI…RIMSIHKSKG (296 aa)).

This sequence belongs to the helicase family. AddA subfamily. Heterodimer of AddA and AddB/RexB. The cofactor is Mg(2+).

It carries out the reaction Couples ATP hydrolysis with the unwinding of duplex DNA by translocating in the 3'-5' direction.. The enzyme catalyses ATP + H2O = ADP + phosphate + H(+). In terms of biological role, the heterodimer acts as both an ATP-dependent DNA helicase and an ATP-dependent, dual-direction single-stranded exonuclease. Recognizes the chi site generating a DNA molecule suitable for the initiation of homologous recombination. The AddA nuclease domain is required for chi fragment generation; this subunit has the helicase and 3' -&gt; 5' nuclease activities. The sequence is that of ATP-dependent helicase/nuclease subunit A from Clostridium perfringens (strain SM101 / Type A).